The sequence spans 269 residues: Tryptophan synthase alpha chain (269 aa).

Catalysis depends on proton acceptor residues Glu-49 and Asp-60.

It belongs to the TrpA family. As to quaternary structure, tetramer of two alpha and two beta chains.

The enzyme catalyses (1S,2R)-1-C-(indol-3-yl)glycerol 3-phosphate + L-serine = D-glyceraldehyde 3-phosphate + L-tryptophan + H2O. It participates in amino-acid biosynthesis; L-tryptophan biosynthesis; L-tryptophan from chorismate: step 5/5. Functionally, the alpha subunit is responsible for the aldol cleavage of indoleglycerol phosphate to indole and glyceraldehyde 3-phosphate. This chain is Tryptophan synthase alpha chain, found in Enterobacter sp. (strain 638).